The chain runs to 162 residues: Regulator of sigma D (162 aa).

It belongs to the Rsd/AlgQ family. In terms of assembly, interacts with RpoD.

It is found in the cytoplasm. Binds RpoD and negatively regulates RpoD-mediated transcription activation by preventing the interaction between the primary sigma factor RpoD with the catalytic core of the RNA polymerase and with promoter DNA. May be involved in replacement of the RNA polymerase sigma subunit from RpoD to RpoS during the transition from exponential growth to the stationary phase. This is Regulator of sigma D from Salmonella typhi.